The following is a 1091-amino-acid chain: Integrin alpha-6 (1091 aa).

Positions 1-23 (MAVAGQLCLLYLSAGLLARLGTA) are cleaved as a signal peptide. Residues 24-1011 (FNLDTREDNV…FPSKTVAQYS (988 aa)) are Extracellular-facing. 7 FG-GAP repeats span residues 30 to 95 (EDNV…GPCT), 101 to 166 (NDAD…IEDD), 176 to 229 (DGRL…FFDM), 244 to 300 (DHDE…KSAH), 301 to 363 (LLPE…KWSN), 364 to 419 (VKPI…GIIT), and 420 to 479 (KPTQ…VTPN). Asn78 is a glycosylation site (N-linked (GlcNAc...) asparagine). 3 disulfides stabilise this stretch: Cys86–Cys94, Cys131–Cys154, and Cys175–Cys188. N-linked (GlcNAc...) asparagine glycans are attached at residues Asn223 and Asn284. Positions 324, 326, 328, and 332 each coordinate Ca(2+). Asn370 carries an N-linked (GlcNAc...) asparagine glycan. 10 residues coordinate Ca(2+): Asp386, Asn388, Asp390, Tyr392, Asp394, Asp441, Asp443, Asn445, Tyr447, and Asp449. 4 cysteine pairs are disulfide-bonded: Cys489–Cys496, Cys502–Cys562, Cys626–Cys632, and Cys726–Cys737. N-linked (GlcNAc...) asparagine glycans are attached at residues Asn731, Asn746, and Asn927. 2 disulfide bridges follow: Cys881-Cys928 and Cys934-Cys939. Residue Asn958 is glycosylated (N-linked (GlcNAc...) asparagine). Residues 1012–1037 (GVAWWIILLAVLAGILMLALLVFLLW) traverse the membrane as a helical segment. Residues 1038 to 1091 (KCGFFKRSRYDDSIPRYHAVRIRKEEREIKDEKHMDNLEKKQWITKWNENESYS) are Cytoplasmic-facing. Residue Cys1039 is the site of S-palmitoyl cysteine; by DHHC3 attachment. Residues 1040 to 1044 (GFFKR) carry the GFFKR motif motif. At Arg1064 the chain carries Phosphoserine.

The protein belongs to the integrin alpha chain family. As to quaternary structure, heterodimer of an alpha and a beta subunit. The alpha subunit is composed of a heavy and a light chain linked by a disulfide bond. Alpha-6 associates with either beta-1 (ITGB1) or beta-4 (ITGB4) to form ITGA6:ITGB1 and ITGA6:ITGB4, respectively. ITGA6:ITGB1 is found in a complex with CD9; interaction takes place in oocytes and is involved in sperm-egg fusion. ITGA6:ITGB4 is found in a ternary complex with NRG1 and ERBB3. ITGA6:ITGB4 is found in a ternary complex with IGF1 and IGF1R. ITGA6:ITGB4 interacts with IGF2. Interacts with ADAM9. Interacts with RAB21. Interacts with MDK. ITGA6:ITGB1 interacts with MDK; this interaction mediates MDK-induced neurite outgrowth. Interacts with CD82; this interaction down-regulates ITGA6-mediated cell adhesion. In terms of processing, isoforms containing segment A, but not segment B, are the major targets for PMA-induced phosphorylation. Phosphorylation occurs on 'Ser-1064' of isoform alpha-6X1A. Phosphorylation is not required for the induction of integrin alpha-6A/beta-1 high affinity but may reduce the affinity for ligand. Undergoes PLAU-mediated cleavage at residues Arg-595-596-Arg in a time-dependent manner to produce processed integrin alpha-6 (alpha6p). Post-translationally, palmitoylation by DHHC3 enhances stability and cell surface expression. In terms of tissue distribution, expressed at low levels in normal skin tissue with elevated levels in skin tumors.

It localises to the cell membrane. In terms of biological role, integrin alpha-6/beta-1 (ITGA6:ITGB1) is a receptor for laminin on platelets. Integrin alpha-6/beta-1 (ITGA6:ITGB1) is present in oocytes and is involved in sperm-egg fusion. Integrin alpha-6/beta-4 (ITGA6:ITGB4) is a receptor for laminin in epithelial cells and it plays a critical structural role in the hemidesmosome. ITGA6:ITGB4 binds to NRG1 (via EGF domain) and this binding is essential for NRG1-ERBB signaling. ITGA6:ITGB4 binds to IGF1 and this binding is essential for IGF1 signaling. ITGA6:ITGB4 binds to IGF2 and this binding is essential for IGF2 signaling. The polypeptide is Integrin alpha-6 (Itga6) (Mus musculus (Mouse)).